Reading from the N-terminus, the 93-residue chain is DNA-directed RNA polymerase subunit omega (93 aa).

Belongs to the RNA polymerase subunit omega family. In terms of assembly, the RNAP catalytic core consists of 2 alpha, 1 beta, 1 beta' and 1 omega subunit. When a sigma factor is associated with the core the holoenzyme is formed, which can initiate transcription.

It catalyses the reaction RNA(n) + a ribonucleoside 5'-triphosphate = RNA(n+1) + diphosphate. Promotes RNA polymerase assembly. Latches the N- and C-terminal regions of the beta' subunit thereby facilitating its interaction with the beta and alpha subunits. This chain is DNA-directed RNA polymerase subunit omega, found in Shewanella loihica (strain ATCC BAA-1088 / PV-4).